The chain runs to 660 residues: Cysteine--tRNA ligase, cytoplasmic (660 aa).

The segment covering Met-1 to Glu-10 has biased composition (polar residues). Residues Met-1 to Lys-20 are disordered. Residue Cys-65 coordinates Zn(2+). The 'HIGH' region motif lies at Pro-67–His-77. The Zn(2+) site is built by Cys-256, His-281, and Glu-285. The 'KMSKS' region motif lies at Lys-314 to Ser-318. An ATP-binding site is contributed by Lys-317. Disordered stretches follow at residues Ile-563 to Lys-584 and Gln-627 to Gln-660. Basic and acidic residues predominate over residues Gln-627 to Asn-639. The span at Ser-643–Gln-660 shows a compositional bias: low complexity.

Belongs to the class-I aminoacyl-tRNA synthetase family. Requires Zn(2+) as cofactor.

The protein localises to the cytoplasm. The enzyme catalyses tRNA(Cys) + L-cysteine + ATP = L-cysteinyl-tRNA(Cys) + AMP + diphosphate. The protein is Cysteine--tRNA ligase, cytoplasmic (cysS) of Dictyostelium discoideum (Social amoeba).